The primary structure comprises 623 residues: Leucine aminopeptidase 2 (623 aa).

A peptide is bound by residues 136 to 138 (QCE) and 261 to 266 (PYGGME). H290 contributes to the Zn(2+) binding site. The Proton acceptor role is filled by E291. Zn(2+)-binding residues include H294 and E313. The Proton donor role is filled by Y391.

The protein belongs to the peptidase M1 family. Zn(2+) is required as a cofactor.

Its subcellular location is the cytoplasm. It localises to the nucleus. It carries out the reaction an epoxide + H2O = an ethanediol. In terms of biological role, aminopeptidase that preferentially cleaves di- and tripeptides. Also has low epoxide hydrolase activity (in vitro). Can hydrolyze the epoxide leukotriene LTA(4) but it forms preferentially 5,6-dihydroxy-7,9,11,14-eicosatetraenoic acid rather than the cytokine leukotriene B(4) as the product compared to the homologous mammalian enzyme (in vitro). This chain is Leucine aminopeptidase 2 (LKH1), found in Candida albicans (strain SC5314 / ATCC MYA-2876) (Yeast).